The following is a 701-amino-acid chain: ER-retained PMA1-suppressing protein 1 (701 aa).

The N-terminal stretch at 1-27 is a signal peptide; it reads MKMNLKRLVVTFFSCITFLLKFTIAAA. The region spanning 28 to 142 is the Thioredoxin 1 domain; it reads EPPEGFPEPL…LIAFARRESM (115 aa). Cysteine 60 and cysteine 63 are disulfide-bonded. N-linked (GlcNAc...) asparagine glycosylation is present at asparagine 85. Cysteine 200 and cysteine 203 are joined by a disulfide. N-linked (GlcNAc...) asparagine glycosylation is found at asparagine 264, asparagine 299, and asparagine 370. Residues 408-446 form the Thioredoxin 2 domain; sequence PTFFMFKDGDPISYVFPGYSTTEMRNIDAIMDWVKKYSN. Residues 646–666 traverse the membrane as a helical segment; the sequence is IIHGNGMPGYLIVIVLFIAIL.

It belongs to the protein disulfide isomerase family. As to quaternary structure, interacts with mutated PMA1-D378N but not wild type PMA1. Interacts with EUG1, KAR2, MPD1 and PDI1.

The protein localises to the endoplasmic reticulum membrane. The enzyme catalyses Catalyzes the rearrangement of -S-S- bonds in proteins.. Its function is as follows. Acts as a membrane-bound chaperone in endoplasmic reticulum quality control. Probably facilitates presentation of substrate to membrane-bound components of the degradation machinery. The chain is ER-retained PMA1-suppressing protein 1 (EPS1) from Saccharomyces cerevisiae (strain ATCC 204508 / S288c) (Baker's yeast).